Reading from the N-terminus, the 310-residue chain is tRNA-cytidine(32) 2-sulfurtransferase (310 aa).

Positions 47 to 52 match the PP-loop motif motif; sequence SGGKDS. [4Fe-4S] cluster-binding residues include Cys122, Cys125, and Cys213.

It belongs to the TtcA family. Homodimer. The cofactor is Mg(2+). [4Fe-4S] cluster is required as a cofactor.

Its subcellular location is the cytoplasm. It catalyses the reaction cytidine(32) in tRNA + S-sulfanyl-L-cysteinyl-[cysteine desulfurase] + AH2 + ATP = 2-thiocytidine(32) in tRNA + L-cysteinyl-[cysteine desulfurase] + A + AMP + diphosphate + H(+). It participates in tRNA modification. In terms of biological role, catalyzes the ATP-dependent 2-thiolation of cytidine in position 32 of tRNA, to form 2-thiocytidine (s(2)C32). The sulfur atoms are provided by the cysteine/cysteine desulfurase (IscS) system. The sequence is that of tRNA-cytidine(32) 2-sulfurtransferase from Serratia proteamaculans (strain 568).